The primary structure comprises 339 residues: DNA-directed RNA polymerase subunit alpha (339 aa).

Residues 1–233 (MVREEVAGST…DLFLPFLHAE (233 aa)) form an alpha N-terminal domain (alpha-NTD) region. Residues 264 to 339 (KKGIPLNCIF…IDLLKNKLSF (76 aa)) form an alpha C-terminal domain (alpha-CTD) region.

This sequence belongs to the RNA polymerase alpha chain family. In plastids the minimal PEP RNA polymerase catalytic core is composed of four subunits: alpha, beta, beta', and beta''. When a (nuclear-encoded) sigma factor is associated with the core the holoenzyme is formed, which can initiate transcription.

It localises to the plastid. The protein resides in the chloroplast. The catalysed reaction is RNA(n) + a ribonucleoside 5'-triphosphate = RNA(n+1) + diphosphate. In terms of biological role, DNA-dependent RNA polymerase catalyzes the transcription of DNA into RNA using the four ribonucleoside triphosphates as substrates. This Festucopsis festucoides protein is DNA-directed RNA polymerase subunit alpha.